The following is a 606-amino-acid chain: NADH-ubiquinone oxidoreductase chain 5 (606 aa).

Helical transmembrane passes span 4–24, 38–58, 87–107, 117–137, 140–160, 171–191, 211–233, 241–261, 273–293, 301–320, 325–347, 366–386, 413–433, 457–477, 488–508, and 584–604; these read FSSL…SSIL, NIIS…IHSG, MIFV…SLWY, FFKY…ANNL, LFIG…WWYG, AILY…WFLF, LPLL…HPWL, TPVS…FLLI, IQSL…ICAL, IIAF…IGIN, AFLH…GSII, MPFT…MPFL, LIAT…ALLG, LLIG…PTTI, LTAL…SLIT, and IKLY…LFNL.

Belongs to the complex I subunit 5 family. Core subunit of respiratory chain NADH dehydrogenase (Complex I) which is composed of 45 different subunits.

The protein localises to the mitochondrion inner membrane. The catalysed reaction is a ubiquinone + NADH + 5 H(+)(in) = a ubiquinol + NAD(+) + 4 H(+)(out). Core subunit of the mitochondrial membrane respiratory chain NADH dehydrogenase (Complex I) which catalyzes electron transfer from NADH through the respiratory chain, using ubiquinone as an electron acceptor. Essential for the catalytic activity and assembly of complex I. This Equus asinus (Donkey) protein is NADH-ubiquinone oxidoreductase chain 5 (MT-ND5).